The following is a 60-amino-acid chain: Bacteriochlorophyll c-binding protein (60 aa).

M1 carries the post-translational modification N-formylmethionine. Residue H25 participates in a bacteriochlorophyll c binding.

The protein belongs to the BChl C/E-binding protein family.

It localises to the chlorosome. The protein localises to the chlorosome envelope. Its function is as follows. Component of the photosynthetic apparatus. The light harvesting B740 complex binds bacteriochlorophyll c. The chain is Bacteriochlorophyll c-binding protein (csmA) from Pelodictyon luteolum.